A 1472-amino-acid polypeptide reads, in one-letter code: Gag-Pol polyprotein (1472 aa).

Gly-2 carries the N-myristoyl glycine; by host lipid modification. Residues Phe-16–Arg-22 carry the Nuclear export signal motif. The Nuclear localization signal motif lies at Lys-26–Lys-32. Disordered stretches follow at residues Glu-115–Tyr-135 and Asp-215–Thr-234. At Tyr-135 the chain carries Phosphotyrosine; by host. 2 CCHC-type zinc fingers span residues Leu-390–Ala-407 and Ile-411–Asn-428. The tract at residues His-454 to Ser-500 is disordered. Over residues Trp-456–Arg-469 the composition is skewed to polar residues. A compositionally biased stretch (basic and acidic residues) spans Thr-483–Arg-499. Positions Val-524–Ile-597 constitute a Peptidase A2 domain. Asp-529 serves as the catalytic For protease activity; shared with dimeric partner. In terms of domain architecture, Reverse transcriptase spans Glu-653–Leu-843. Residues Asp-719, Asp-794, and Asp-795 each contribute to the Mg(2+) site. Residues Trp-836–His-844 are RT 'primer grip'. Positions Trp-1007–Trp-1023 match the Tryptophan repeat motif motif. Positions Ile-1043–Arg-1166 constitute an RNase H type-1 domain. Residues Asp-1052, Glu-1087, Asp-1107, and Asp-1158 each contribute to the Mg(2+) site. The segment at Asp-1172–Gln-1213 adopts an Integrase-type zinc-finger fold. Zn(2+) contacts are provided by His-1181, His-1185, Cys-1209, and Cys-1212. The region spanning Val-1223 to Leu-1373 is the Integrase catalytic domain. Mg(2+) contacts are provided by Asp-1233 and Asp-1285. Residues Phe-1392 to Asp-1439 constitute a DNA-binding region (integrase-type). Residues Tyr-1440 to Glu-1472 are disordered. The span at Gly-1454 to Glu-1463 shows a compositional bias: basic and acidic residues.

Homotrimer. Interacts with gp41 (via C-terminus). As to quaternary structure, homodimer. The active site consists of two apposed aspartic acid residues. In terms of assembly, heterodimer of p66 RT and p51 RT (RT p66/p51). Heterodimerization of RT is essential for DNA polymerase activity. Despite the sequence identities, p66 RT and p51 RT have distinct folding. Homotetramer; may further associate as a homohexadecamer. Requires Mg(2+) as cofactor. In terms of processing, specific enzymatic cleavages by the viral protease yield mature proteins. The protease is released by autocatalytic cleavage. The polyprotein is cleaved during and after budding, this process is termed maturation. Proteolytic cleavage of p66 RT removes the RNase H domain to yield the p51 RT subunit. Capsid protein p24 is phosphorylated.

Its subcellular location is the virion. It localises to the host nucleus. The protein resides in the host cytoplasm. It is found in the host cell membrane. It carries out the reaction Specific for a P1 residue that is hydrophobic, and P1' variable, but often Pro.. The catalysed reaction is Endohydrolysis of RNA in RNA/DNA hybrids. Three different cleavage modes: 1. sequence-specific internal cleavage of RNA. Human immunodeficiency virus type 1 and Moloney murine leukemia virus enzymes prefer to cleave the RNA strand one nucleotide away from the RNA-DNA junction. 2. RNA 5'-end directed cleavage 13-19 nucleotides from the RNA end. 3. DNA 3'-end directed cleavage 15-20 nucleotides away from the primer terminus.. The enzyme catalyses 3'-end directed exonucleolytic cleavage of viral RNA-DNA hybrid.. It catalyses the reaction DNA(n) + a 2'-deoxyribonucleoside 5'-triphosphate = DNA(n+1) + diphosphate. The viral protease is inhibited by many synthetic protease inhibitors (PIs), such as amprenavir, atazanavir, indinavir, loprinavir, nelfinavir, ritonavir and saquinavir. RT can be inhibited either by nucleoside RT inhibitors (NRTIs) or by non nucleoside RT inhibitors (NNRTIs). NRTIs act as chain terminators, whereas NNRTIs inhibit DNA polymerization by binding a small hydrophobic pocket near the RT active site and inducing an allosteric change in this region. Classical NRTIs are abacavir, adefovir (PMEA), didanosine (ddI), lamivudine (3TC), stavudine (d4T), tenofovir (PMPA), zalcitabine (ddC), and zidovudine (AZT). Classical NNRTIs are atevirdine (BHAP U-87201E), delavirdine, efavirenz (DMP-266), emivirine (I-EBU), and nevirapine (BI-RG-587). The tritherapies used as a basic effective treatment of AIDS associate two NRTIs and one NNRTI. Use of protease inhibitors in tritherapy regimens permit more ambitious therapeutic strategies. Functionally, gag-Pol polyprotein and Gag polyprotein may regulate their own translation, by the binding genomic RNA in the 5'-UTR. At low concentration, Gag-Pol and Gag would promote translation, whereas at high concentration, the polyproteins encapsidate genomic RNA and then shut off translation. Its function is as follows. Matrix protein p17 has two main functions: in infected cell, it targets Gag and Gag-pol polyproteins to the plasma membrane via a multipartite membrane-binding signal, that includes its myristointegration complex. The myristoylation signal and the NLS exert conflicting influences its subcellular localization. The key regulation of these motifs might be phosphorylation of a portion of MA molecules on the C-terminal tyrosine at the time of virus maturation, by virion-associated cellular tyrosine kinase. Implicated in the release from host cell mediated by Vpu. In terms of biological role, capsid protein p24 forms the conical core that encapsulates the genomic RNA-nucleocapsid complex in the virion. The core is constituted by capsid protein hexamer subunits. The core is disassembled soon after virion entry. Interaction with host PPIA/CYPA protects the virus from restriction by host TRIM5-alpha and from an unknown antiviral activity in host cells. This capsid restriction by TRIM5 is one of the factors which restricts SIV to the simian species. Nucleocapsid protein p7 encapsulates and protects viral dimeric unspliced (genomic) RNA. Binds these RNAs through its zinc fingers. Facilitates rearangement of nucleic acid secondary structure during retrotranscription of genomic RNA. This capability is referred to as nucleic acid chaperone activity. Functionally, the aspartyl protease mediates proteolytic cleavages of Gag and Gag-Pol polyproteins during or shortly after the release of the virion from the plasma membrane. Cleavages take place as an ordered, step-wise cascade to yield mature proteins. This process is called maturation. Displays maximal activity during the budding process just prior to particle release from the cell. Also cleaves Nef and Vif, probably concomitantly with viral structural proteins on maturation of virus particles. Hydrolyzes host EIF4GI and PABP1 in order to shut off the capped cellular mRNA translation. The resulting inhibition of cellular protein synthesis serves to ensure maximal viral gene expression and to evade host immune response. Its function is as follows. Reverse transcriptase/ribonuclease H (RT) is a multifunctional enzyme that converts the viral dimeric RNA genome into dsDNA in the cytoplasm, shortly after virus entry into the cell. This enzyme displays a DNA polymerase activity that can copy either DNA or RNA templates, and a ribonuclease H (RNase H) activity that cleaves the RNA strand of RNA-DNA heteroduplexes in a partially processive 3' to 5' endonucleasic mode. Conversion of viral genomic RNA into dsDNA requires many steps. A tRNA binds to the primer-binding site (PBS) situated at the 5'-end of the viral RNA. RT uses the 3' end of the tRNA primer to perform a short round of RNA-dependent minus-strand DNA synthesis. The reading proceeds through the U5 region and ends after the repeated (R) region which is present at both ends of viral RNA. The portion of the RNA-DNA heteroduplex is digested by the RNase H, resulting in a ssDNA product attached to the tRNA primer. This ssDNA/tRNA hybridizes with the identical R region situated at the 3' end of viral RNA. This template exchange, known as minus-strand DNA strong stop transfer, can be either intra- or intermolecular. RT uses the 3' end of this newly synthesized short ssDNA to perform the RNA-dependent minus-strand DNA synthesis of the whole template. RNase H digests the RNA template except for two polypurine tracts (PPTs) situated at the 5'-end and near the center of the genome. It is not clear if both polymerase and RNase H activities are simultaneous. RNase H can probably proceed both in a polymerase-dependent (RNA cut into small fragments by the same RT performing DNA synthesis) and a polymerase-independent mode (cleavage of remaining RNA fragments by free RTs). Secondly, RT performs DNA-directed plus-strand DNA synthesis using the PPTs that have not been removed by RNase H as primers. PPTs and tRNA primers are then removed by RNase H. The 3' and 5' ssDNA PBS regions hybridize to form a circular dsDNA intermediate. Strand displacement synthesis by RT to the PBS and PPT ends produces a blunt ended, linear dsDNA copy of the viral genome that includes long terminal repeats (LTRs) at both ends. In terms of biological role, integrase catalyzes viral DNA integration into the host chromosome, by performing a series of DNA cutting and joining reactions. This enzyme activity takes place after virion entry into a cell and reverse transcription of the RNA genome in dsDNA. The first step in the integration process is 3' processing. This step requires a complex comprising the viral genome, matrix protein, Vpr and integrase. This complex is called the pre-integration complex (PIC). The integrase protein removes 2 nucleotides from each 3' end of the viral DNA, leaving recessed CA OH's at the 3' ends. In the second step, the PIC enters cell nucleus. This process is mediated through integrase and Vpr proteins, and allows the virus to infect a non dividing cell. This ability to enter the nucleus is specific of lentiviruses, other retroviruses cannot and rely on cell division to access cell chromosomes. In the third step, termed strand transfer, the integrase protein joins the previously processed 3' ends to the 5' ends of strands of target cellular DNA at the site of integration. The 5'-ends are produced by integrase-catalyzed staggered cuts, 5 bp apart. A Y-shaped, gapped, recombination intermediate results, with the 5'-ends of the viral DNA strands and the 3' ends of target DNA strands remaining unjoined, flanking a gap of 5 bp. The last step is viral DNA integration into host chromosome. This involves host DNA repair synthesis in which the 5 bp gaps between the unjoined strands are filled in and then ligated. Since this process occurs at both cuts flanking the SIV genome, a 5 bp duplication of host DNA is produced at the ends of SIV integration. Alternatively, Integrase may catalyze the excision of viral DNA just after strand transfer, this is termed disintegration. The sequence is that of Gag-Pol polyprotein (gag-pol) from Simian immunodeficiency virus agm.grivet (isolate AGM gr-1) (SIV-agm.gri).